The primary structure comprises 345 residues: Transcription factor 19 (345 aa).

Residues 31 to 88 (YRLGHRADLCDVALRPQQEPGLISGIHAELHAEPRGDDWRVSLEDHSSQGTLVNNVRL) enclose the FHA domain. Phosphoserine is present on Ser78. Disordered regions lie at residues 147-167 (AGFR…STLS) and 190-227 (LTFS…RKSV). The PHD-type zinc-finger motif lies at 293–342 (AAPCCCLPQEETVAWVQCDGCDVWFHVACVGCSIQAAREADFRCPGCRAG). Cys296, Cys298, Cys310, Cys313, His318, Cys321, Cys336, and Cys339 together coordinate Zn(2+).

The protein resides in the nucleus. Potential transcription factor that may play a role in the regulation of genes involved in cell cycle G1/S transition. May bind to regulatory elements of genes, including the promoter of the transcription factor FOXO1. This Pan troglodytes (Chimpanzee) protein is Transcription factor 19 (TCF19).